Here is a 299-residue protein sequence, read N- to C-terminus: Protein sprouty homolog 4 (299 aa).

N-acetylmethionine is present on methionine 1. Disordered regions lie at residues 50-79 and 92-127; these read NDYI…PTPA and FSGR…ASPR. Residues 92–107 are compositionally biased toward low complexity; it reads FSGRPSSVSSSSSTSS. Serine 125 is modified (phosphoserine). An SPR domain is found at 166–273; sequence KCKECASPRT…GYDRLRRPGC (108 aa).

It belongs to the sprouty family. In terms of assembly, interacts (via C-terminus) with TESK1 (via both C- and N-termini); the interaction inhibits TESK1 kinase activity. Interacts with RAF1. Interacts with CAV1 (via C-terminus).

It is found in the cytoplasm. It localises to the cell projection. Its subcellular location is the ruffle membrane. In terms of biological role, suppresses the insulin receptor and EGFR-transduced MAPK signaling pathway, but does not inhibit MAPK activation by a constitutively active mutant Ras. Probably impairs the formation of GTP-Ras. Inhibits Ras-independent, but not Ras-dependent, activation of RAF1. Represses integrin-mediated cell spreading via inhibition of TESK1-mediated phosphorylation of cofilin. This is Protein sprouty homolog 4 (SPRY4) from Bos taurus (Bovine).